The following is a 954-amino-acid chain: Glycine dehydrogenase (decarboxylating) (954 aa).

Lys-700 carries the post-translational modification N6-(pyridoxal phosphate)lysine.

The protein belongs to the GcvP family. The glycine cleavage system is composed of four proteins: P, T, L and H. The cofactor is pyridoxal 5'-phosphate.

It catalyses the reaction N(6)-[(R)-lipoyl]-L-lysyl-[glycine-cleavage complex H protein] + glycine + H(+) = N(6)-[(R)-S(8)-aminomethyldihydrolipoyl]-L-lysyl-[glycine-cleavage complex H protein] + CO2. The glycine cleavage system catalyzes the degradation of glycine. The P protein binds the alpha-amino group of glycine through its pyridoxal phosphate cofactor; CO(2) is released and the remaining methylamine moiety is then transferred to the lipoamide cofactor of the H protein. The protein is Glycine dehydrogenase (decarboxylating) of Dinoroseobacter shibae (strain DSM 16493 / NCIMB 14021 / DFL 12).